The chain runs to 165 residues: Ureidoglycolate lyase (165 aa).

Belongs to the ureidoglycolate lyase family. Homodimer. The cofactor is Ni(2+).

The catalysed reaction is (S)-ureidoglycolate = urea + glyoxylate. Its pathway is nitrogen metabolism; (S)-allantoin degradation. Functionally, catalyzes the catabolism of the allantoin degradation intermediate (S)-ureidoglycolate, generating urea and glyoxylate. Involved in the utilization of allantoin as nitrogen source. This Chelativorans sp. (strain BNC1) protein is Ureidoglycolate lyase.